Reading from the N-terminus, the 240-residue chain is Thymidylate kinase (240 aa).

10 to 17 (GINGVGKS) is a binding site for ATP.

Belongs to the thymidylate kinase family.

The catalysed reaction is dTMP + ATP = dTDP + ADP. It functions in the pathway pyrimidine metabolism; dTTP biosynthesis. In terms of biological role, catalyzes the conversion of dTMP to dTDP. This African swine fever virus (strain Badajoz 1971 Vero-adapted) (Ba71V) protein is Thymidylate kinase (TMK).